Consider the following 175-residue polypeptide: Large ribosomal subunit protein uL6 (175 aa).

It belongs to the universal ribosomal protein uL6 family. In terms of assembly, part of the 50S ribosomal subunit.

Its function is as follows. This protein binds to the 23S rRNA, and is important in its secondary structure. It is located near the subunit interface in the base of the L7/L12 stalk, and near the tRNA binding site of the peptidyltransferase center. In Xanthomonas oryzae pv. oryzae (strain MAFF 311018), this protein is Large ribosomal subunit protein uL6.